We begin with the raw amino-acid sequence, 791 residues long: Splicing factor 3A subunit 1 (791 aa).

Residues 1-41 (MQAGPVQAVPPPPPVATESKQPIEEEASSKEDPTPSKPVVG) form a disordered region. Lys-20 is covalently cross-linked (Glycyl lysine isopeptide (Lys-Gly) (interchain with G-Cter in SUMO2)). Residues 21–34 (QPIEEEASSKEDPT) are compositionally biased toward basic and acidic residues. The SURP motif 1 repeat unit spans residues 52 to 94 (IVDKTASFVARNGPEFEARIRQNEINNPKFNFLNPNDPYHAYY). Lys-55 carries the N6-acetyllysine modification. Lys-131 participates in a covalent cross-link: Glycyl lysine isopeptide (Lys-Gly) (interchain with G-Cter in SUMO2). The SURP motif 2 repeat unit spans residues 166-208 (VVKLTAQFVARNGRQFLTQLMQKEQRNYQFDFLRPQHSLFNYF). Positions 318–411 (GESEEVEMEV…APAPDEYLVS (94 aa)) are disordered. A phosphoserine mark is found at Ser-320 and Ser-329. Residues 320–336 (SEEVEMEVESDEEDQEK) show a composition bias toward acidic residues. Positions 340–351 (TPSQLDQDTQVQ) are enriched in polar residues. Acidic residues predominate over residues 352–362 (DMDEGSDDEEE). Residue Ser-357 is modified to Phosphoserine. Pro residues predominate over residues 366–382 (VPPPPETPMPPPLPPTP). Over residues 386-395 (IVRKDYDPKA) the composition is skewed to basic and acidic residues. Ser-411 bears the Phosphoserine mark. A Glycyl lysine isopeptide (Lys-Gly) (interchain with G-Cter in SUMO2) cross-link involves residue Lys-422. The residue at position 449 (Ser-449) is a Phosphoserine. At Tyr-454 the chain carries Phosphotyrosine. Basic and acidic residues predominate over residues 486 to 500 (IGEEEIQKPEEKVTW). Disordered regions lie at residues 486-516 (IGEE…AAQA), 528-582 (HKAK…AMPP), and 664-684 (PMPP…KKLK). Lys-497 participates in a covalent cross-link: Glycyl lysine isopeptide (Lys-Gly) (interchain with G-Cter in SUMO2). The residue at position 506 (Ser-506) is a Phosphoserine. The segment covering 507–516 (MARTQQAAQA) has biased composition (polar residues). A Glycyl lysine isopeptide (Lys-Gly) (interchain with G-Cter in SUMO2) cross-link involves residue Lys-540. The span at 561–570 (ATNIPSSAPP) shows a compositional bias: polar residues. A compositionally biased stretch (pro residues) spans 664–673 (PMPPVHPPPP). Residues 678 to 700 (PPSKKLKTEDSLMPEEEFLRRNK) are required and sufficient for nuclear import. A Glycyl lysine isopeptide (Lys-Gly) (interchain with G-Cter in SUMO2) cross-link involves residue Lys-684. The Ubiquitin-like domain occupies 705–788 (IKVQVPNMQD…IHLALKERGG (84 aa)). Tyr-757 is modified (phosphotyrosine).

Component of the 17S U2 SnRNP complex, a ribonucleoprotein complex that contains small nuclear RNA (snRNA) U2 and a number of specific proteins. Part of the SF3A subcomplex of the 17S U2 SnRNP complex which is composed of three subunits; SF3A3/SAP61, SF3A2/SAP62 and SF3A1/SAP114. SF3A associates with the splicing factor SF3B and a 12S RNA unit to form the mature 17S U2 small nuclear ribonucleoprotein complex (17S U2 snRNP). SF3A1 functions as a scaffold that interacts directly with both SF3A2 and SF3A3. Identified in the spliceosome 'E' complex, a precursor of the spliceosome 'A' complex. Identified in the spliceosome 'A' and 'B' complexes. Identified in the spliceosome 'C' complex. Interacts with P2RX6; resulting in a reduction of the splicing activity.

The protein resides in the nucleus. It localises to the nucleus speckle. Component of the 17S U2 SnRNP complex of the spliceosome, a large ribonucleoprotein complex that removes introns from transcribed pre-mRNAs. The 17S U2 SnRNP complex (1) directly participates in early spliceosome assembly and (2) mediates recognition of the intron branch site during pre-mRNA splicing by promoting the selection of the pre-mRNA branch-site adenosine, the nucleophile for the first step of splicing. Within the 17S U2 SnRNP complex, SF3A1 is part of the SF3A subcomplex that contributes to the assembly of the 17S U2 snRNP, and the subsequent assembly of the pre-spliceosome 'E' complex and the pre-catalytic spliceosome 'A' complex. Involved in pre-mRNA splicing as a component of pre-catalytic spliceosome 'B' complexes. In Mus musculus (Mouse), this protein is Splicing factor 3A subunit 1 (Sf3a1).